A 254-amino-acid chain; its full sequence is 3-deoxy-manno-octulosonate cytidylyltransferase (254 aa).

It belongs to the KdsB family.

Its subcellular location is the cytoplasm. The enzyme catalyses 3-deoxy-alpha-D-manno-oct-2-ulosonate + CTP = CMP-3-deoxy-beta-D-manno-octulosonate + diphosphate. It functions in the pathway nucleotide-sugar biosynthesis; CMP-3-deoxy-D-manno-octulosonate biosynthesis; CMP-3-deoxy-D-manno-octulosonate from 3-deoxy-D-manno-octulosonate and CTP: step 1/1. The protein operates within bacterial outer membrane biogenesis; lipopolysaccharide biosynthesis. Functionally, activates KDO (a required 8-carbon sugar) for incorporation into bacterial lipopolysaccharide in Gram-negative bacteria. This chain is 3-deoxy-manno-octulosonate cytidylyltransferase, found in Pseudomonas putida (strain W619).